Here is a 284-residue protein sequence, read N- to C-terminus: Bifunctional protein FolD (284 aa).

Residues Gly-166–Ser-168 and Ile-232 each bind NADP(+).

Belongs to the tetrahydrofolate dehydrogenase/cyclohydrolase family. Homodimer.

It carries out the reaction (6R)-5,10-methylene-5,6,7,8-tetrahydrofolate + NADP(+) = (6R)-5,10-methenyltetrahydrofolate + NADPH. The catalysed reaction is (6R)-5,10-methenyltetrahydrofolate + H2O = (6R)-10-formyltetrahydrofolate + H(+). It participates in one-carbon metabolism; tetrahydrofolate interconversion. Its function is as follows. Catalyzes the oxidation of 5,10-methylenetetrahydrofolate to 5,10-methenyltetrahydrofolate and then the hydrolysis of 5,10-methenyltetrahydrofolate to 10-formyltetrahydrofolate. This Shewanella halifaxensis (strain HAW-EB4) protein is Bifunctional protein FolD.